The following is a 493-amino-acid chain: Cyclin-dependent kinase-like 2 (493 aa).

Positions 4–287 constitute a Protein kinase domain; the sequence is YENLGLVGEG…CAELLHHDFF (284 aa). ATP contacts are provided by residues 10–18 and K33; that span reads VGEGSYGMV. A [NKR]KIAxRE motif is present at residues 45-51; that stretch reads KKIAMRE. The active-site Proton acceptor is D126. Residues 363-384 form a disordered region; that stretch reads GEKAEKGNRASNASCLHDSRTS.

The protein belongs to the protein kinase superfamily. CMGC Ser/Thr protein kinase family. CDC2/CDKX subfamily. In terms of tissue distribution, expressed in testis and kidney, and at lower level in brain and lung.

It is found in the cytoplasm. The protein localises to the nucleus. It catalyses the reaction L-seryl-[protein] + ATP = O-phospho-L-seryl-[protein] + ADP + H(+). The catalysed reaction is L-threonyl-[protein] + ATP = O-phospho-L-threonyl-[protein] + ADP + H(+). This Homo sapiens (Human) protein is Cyclin-dependent kinase-like 2.